A 439-amino-acid polypeptide reads, in one-letter code: Xylose isomerase (439 aa).

Catalysis depends on residues H99 and D102. Mg(2+) contacts are provided by E230, E266, H269, D294, D305, D307, and D337.

Belongs to the xylose isomerase family. Homotetramer. The cofactor is Mg(2+).

It is found in the cytoplasm. The catalysed reaction is alpha-D-xylose = alpha-D-xylulofuranose. The polypeptide is Xylose isomerase (Shouchella clausii (strain KSM-K16) (Alkalihalobacillus clausii)).